Consider the following 32-residue polypeptide: Natriuretic peptide Coa_NP2 (32 aa).

An intrachain disulfide couples C8 to C24.

The protein belongs to the natriuretic peptide family. Snake NP subfamily. As to expression, expressed by the venom gland.

The protein resides in the secreted. In terms of biological role, snake venom natriuretic peptide that exhibits hypotensive and vasorelaxant effects. Produces a dose-dependent hypotension in rats, followed by significant increases in concentrations of markers of nitric oxide (NO) formation measured in the plasma and vasorelaxation in a thoracic aortic ring bath. The peptide may exert its hypotensive action, at least in part, through stimulation of NO production. The vasorelaxant effect is endothelium-dependent and does not appear to be mediated by the natriuretic peptide receptor-A, as its action is not modified by isatin (a potent NPR1 antagonist). May act by activating the natriuretic peptide receptor-B (NPR2). The polypeptide is Natriuretic peptide Coa_NP2 (Crotalus lutosus abyssus (Grand Canyon rattlesnake)).